The sequence spans 276 residues: Phosphate import ATP-binding protein PstB 2 (276 aa).

An ABC transporter domain is found at 22–262 (MAAVNLTLGF…PKHAETARYV (241 aa)). ATP is bound at residue 54-61 (GPTGSGKT).

Belongs to the ABC transporter superfamily. Phosphate importer (TC 3.A.1.7) family. The complex is composed of two ATP-binding proteins (PstB), two transmembrane proteins (PstC and PstA) and a solute-binding protein (PstS).

It localises to the cell membrane. It carries out the reaction phosphate(out) + ATP + H2O = ADP + 2 phosphate(in) + H(+). Its function is as follows. Part of the ABC transporter complex PstSACB involved in phosphate import. Responsible for energy coupling to the transport system. This is Phosphate import ATP-binding protein PstB 2 from Mycobacterium bovis (strain ATCC BAA-935 / AF2122/97).